Here is a 690-residue protein sequence, read N- to C-terminus: Protein-glucosylgalactosylhydroxylysine glucosidase (690 aa).

Residue 299–300 (WD) participates in substrate binding. The active-site Proton donor is the glutamate 429. Substrate is bound at residue 497 to 498 (KQ).

Belongs to the glycosyl hydrolase 65 family.

The enzyme catalyses (5R)-5-O-[alpha-D-glucosyl-(1-&gt;2)-beta-D-galactosyl]-5-hydroxy-L-lysyl-[collagen] + H2O = (5R)-5-O-(beta-D-galactosyl)-5-hydroxy-L-lysyl-[collagen] + D-glucose. Catalyzes the hydrolysis of glucose from the disaccharide unit linked to hydroxylysine residues of collagen and collagen-like proteins. The protein is Protein-glucosylgalactosylhydroxylysine glucosidase of Mus musculus (Mouse).